The following is a 579-amino-acid chain: Sulfite reductase [NADPH] hemoprotein beta-component (579 aa).

The [4Fe-4S] cluster site is built by C434, C440, C479, and C483. Residue C483 coordinates siroheme.

It belongs to the nitrite and sulfite reductase 4Fe-4S domain family. As to quaternary structure, alpha(8)-beta(8). The alpha component is a flavoprotein, the beta component is a hemoprotein. Siroheme serves as cofactor. It depends on [4Fe-4S] cluster as a cofactor.

The catalysed reaction is hydrogen sulfide + 3 NADP(+) + 3 H2O = sulfite + 3 NADPH + 4 H(+). It functions in the pathway sulfur metabolism; hydrogen sulfide biosynthesis; hydrogen sulfide from sulfite (NADPH route): step 1/1. Component of the sulfite reductase complex that catalyzes the 6-electron reduction of sulfite to sulfide. This is one of several activities required for the biosynthesis of L-cysteine from sulfate. The polypeptide is Sulfite reductase [NADPH] hemoprotein beta-component (Salmonella choleraesuis (strain SC-B67)).